A 200-amino-acid polypeptide reads, in one-letter code: MSFSPLIRQLIDALRTLPGVGQKTAQRMALQLLERDRSGGVRLAQALSLAMEGVGHCRQCRTLTEQELCPQCADTRRDDTQLCVVEGPMDVYAVEQTGYRGRYFVLKGHLSPLDGLGPDAIGVPQLMARIEEQGSFTEVILATNPTVEGEATAHYIAQLLAEKGLVASRIAHGVPLGGELELVDGGTLAHAFAGRKPISL.

The segment at 57 to 72 (CRQCRTLTEQELCPQC) adopts a C4-type zinc-finger fold. The Toprim domain occupies 80–175 (TQLCVVEGPM…VASRIAHGVP (96 aa)).

The protein belongs to the RecR family.

Its function is as follows. May play a role in DNA repair. It seems to be involved in an RecBC-independent recombinational process of DNA repair. It may act with RecF and RecO. This is Recombination protein RecR from Pseudomonas putida (strain W619).